We begin with the raw amino-acid sequence, 383 residues long: F-box/kelch-repeat protein At2g22030 (383 aa).

An F-box domain is found at Ser23–Leu71. Kelch repeat units follow at residues Lys130–Gly175, Lys176–Tyr220, and Gly269–Asp317.

The protein is F-box/kelch-repeat protein At2g22030 of Arabidopsis thaliana (Mouse-ear cress).